A 172-amino-acid polypeptide reads, in one-letter code: MEFFNVGKIVNTQGLQGEMRVLSVSDFADERYRKGSQLALFDEKDHFYSEVEIASHRRQKNFDIIKFKGMNHINDIEKFKGFTLKVSQQHLSDLDEGEFYYHQIIGLEVYENDVYIGTIKEILQPGANDVWVVKRQGKKDLLLPFIPPVVLNVDVEANRVDVAIMEGLDDED.

The PRC barrel domain occupies 95–168 (DEGEFYYHQI…RVDVAIMEGL (74 aa)).

It belongs to the RimM family. As to quaternary structure, binds ribosomal protein uS19.

The protein localises to the cytoplasm. An accessory protein needed during the final step in the assembly of 30S ribosomal subunit, possibly for assembly of the head region. Essential for efficient processing of 16S rRNA. May be needed both before and after RbfA during the maturation of 16S rRNA. It has affinity for free ribosomal 30S subunits but not for 70S ribosomes. This is Ribosome maturation factor RimM from Streptococcus uberis (strain ATCC BAA-854 / 0140J).